A 635-amino-acid chain; its full sequence is Transcription termination factor FttA (635 aa).

KHa stretches follow at residues 1-69 (MSAE…PSVL) and 4-69 (EDIL…PSVL). The segment at 70–137 (VEPDIAKDKI…WAPKPVRTPP (68 aa)) is KHb. 2 metallo-beta-lactamase N-terminus regions span residues 179–382 (WVRT…YGGY) and 179–383 (WVRT…GGYD). Beta-Casp regions lie at residues 180–577 (VRTS…GFSG) and 383–576 (DDVL…EGFS). 6 residues coordinate Zn(2+): His241, His243, Asp245, His246, His328, and Asp351. Metallo-beta-lactamase C-terminus regions lie at residues 577–635 (GHSD…IRLR) and 578–635 (HSDR…IRLR). A Zn(2+)-binding site is contributed by His602.

This sequence belongs to the metallo-beta-lactamase superfamily. RNA-metabolizing metallo-beta-lactamase-like family. FttA subfamily. As to quaternary structure, homodimer. Interacts with RNA polymerase (RNAP); interaction is not dependent on DNA or RNA. Interacts with the Spt4-Spt5 complex. Requires Zn(2+) as cofactor.

The protein localises to the chromosome. Terminates transcription on the whole genome. Termination is linked to FttA-mediated RNA cleavage and does not require NTP hydrolysis. Cleaves endonucleolytically at the RNA exit channel of RNA polymerase (RNAP); the 5'-3' exonuclease activity of this protein degrades the nascent RNA released from RNAP. Functionally, terminates transcription genome-wide. Transcription termination is most effective in vivo on RNAs with more than one U4-tract in their 3'-ends (including non-protein coding RNAs); U4-tracts are recognized by this protein. Also plays a role in termination of RNAs without U-tracts by an unknown mechanism. Has endonuclease activity after U-rich tracts in transcription termination sites. Binds RNA at U4-tracts found directly upstream of the experimentally determined transcription termination sites; binds preferentially to RNAs with more U4-tracts at their 3'-ends. In Methanococcus maripaludis (strain DSM 14266 / JCM 13030 / NBRC 101832 / S2 / LL), this protein is Transcription termination factor FttA.